The following is a 467-amino-acid chain: ATP-dependent protease ATPase subunit HslU (467 aa).

Residues Val-22 and 64–69 (GVGKTE) each bind ATP. The disordered stretch occupies residues 146–185 (KASNNSNPLESLLGGAIPNFGNNDDEEEETPTEEIKTKRS). The segment covering 168–177 (NDDEEEETPT) has biased composition (acidic residues). The ATP site is built by Asp-280, Glu-345, and Arg-417.

It belongs to the ClpX chaperone family. HslU subfamily. A double ring-shaped homohexamer of HslV is capped on each side by a ring-shaped HslU homohexamer. The assembly of the HslU/HslV complex is dependent on binding of ATP.

It localises to the cytoplasm. Its function is as follows. ATPase subunit of a proteasome-like degradation complex; this subunit has chaperone activity. The binding of ATP and its subsequent hydrolysis by HslU are essential for unfolding of protein substrates subsequently hydrolyzed by HslV. HslU recognizes the N-terminal part of its protein substrates and unfolds these before they are guided to HslV for hydrolysis. The protein is ATP-dependent protease ATPase subunit HslU of Staphylococcus haemolyticus (strain JCSC1435).